A 448-amino-acid chain; its full sequence is Probable D-serine dehydratase (448 aa).

Position 119 is an N6-(pyridoxal phosphate)lysine (Lys119).

It belongs to the serine/threonine dehydratase family. DsdA subfamily. It depends on pyridoxal 5'-phosphate as a cofactor.

It carries out the reaction D-serine = pyruvate + NH4(+). The sequence is that of Probable D-serine dehydratase from Pseudomonas paraeruginosa (strain DSM 24068 / PA7) (Pseudomonas aeruginosa (strain PA7)).